A 605-amino-acid polypeptide reads, in one-letter code: Glucose-6-phosphate isomerase (605 aa).

Glu410 functions as the Proton donor in the catalytic mechanism. Catalysis depends on residues His441 and Lys569.

The protein belongs to the GPI family.

It localises to the cytoplasm. The catalysed reaction is alpha-D-glucose 6-phosphate = beta-D-fructose 6-phosphate. The protein operates within carbohydrate degradation; glycolysis; D-glyceraldehyde 3-phosphate and glycerone phosphate from D-glucose: step 2/4. This is Glucose-6-phosphate isomerase (PGI) from Leishmania mexicana.